The sequence spans 482 residues: 2-succinylbenzoate--CoA ligase (482 aa).

It belongs to the ATP-dependent AMP-binding enzyme family. MenE subfamily.

It carries out the reaction 2-succinylbenzoate + ATP + CoA = 2-succinylbenzoyl-CoA + AMP + diphosphate. The protein operates within quinol/quinone metabolism; 1,4-dihydroxy-2-naphthoate biosynthesis; 1,4-dihydroxy-2-naphthoate from chorismate: step 5/7. It functions in the pathway quinol/quinone metabolism; menaquinone biosynthesis. Functionally, converts 2-succinylbenzoate (OSB) to 2-succinylbenzoyl-CoA (OSB-CoA). This is 2-succinylbenzoate--CoA ligase from Bacillus thuringiensis subsp. konkukian (strain 97-27).